The sequence spans 345 residues: Neurotrimin (345 aa).

The signal sequence occupies residues 1-30; that stretch reads MGVCGSLFLPWKCLVVVSLRLLFLVPTGVP. 3 Ig-like C2-type domains span residues 39–126, 136–218, and 222–309; these read PKAM…PKTS, PKIV…VKVT, and PPYI…ASIT. Residues Asn44, Asn70, and Asn152 are each glycosylated (N-linked (GlcNAc...) asparagine). A disulfide bond links Cys57 and Cys115. 2 disulfide bridges follow: Cys157–Cys201 and Cys243–Cys295. Asn284, Asn292, Asn305, and Asn321 each carry an N-linked (GlcNAc...) asparagine glycan. The GPI-anchor amidated asparagine moiety is linked to residue Asn321. Residues 322-345 constitute a propeptide, removed in mature form; it reads GTSSRRAGCLWLLPLLVLHLLLKF.

Belongs to the immunoglobulin superfamily. IgLON family.

Its subcellular location is the cell membrane. Neural cell adhesion molecule. This chain is Neurotrimin (NTM), found in Bos taurus (Bovine).